Consider the following 670-residue polypeptide: Leucine zipper putative tumor suppressor 2 (670 aa).

Disordered regions lie at residues 1–52 (MAIV…GVPG), 92–131 (NEDF…IPVS), and 150–323 (PVLP…PSDE). Residues 1–333 (MAIVQTLPVP…ALLHCVLEGK (333 aa)) form a required for centrosomal localization region. Residues 187–199 (ASSSSSSSSSSAA) are compositionally biased toward low complexity. Polar residues predominate over residues 213 to 233 (PSGTLSDSGRNSLSSLPTYST). 2 stretches are compositionally biased toward low complexity: residues 242 to 251 (SPGGHLPSHG) and 260 to 310 (PARG…GGDR). Phosphoserine occurs at positions 249 and 296. Positions 311 to 321 (SPPPPPPPPPS) are enriched in pro residues. Positions 329-650 (VLEGKLRDRE…LELEARELAD (322 aa)) form a coiled coil. The tract at residues 448–670 (SGEISLLKQQ…CLEEITATEI (223 aa)) is sufficient for interaction with CTNNB1. Residues 451 to 670 (ISLLKQQLKE…CLEEITATEI (220 aa)) form a sufficient for interaction with KATNB1 and for inhibition of katanin-mediated microtubule severing region. Position 571 is a phosphoserine (Ser-571). A Nuclear export signal motif is present at residues 632–641 (LEQELQQLSL).

The protein belongs to the LZTS2 family. In terms of assembly, interacts with CTNNB1. Interacts with KATNB1. Also interacts with gamma-tubulin and KIF23.

The protein localises to the cytoplasm. The protein resides in the cytoskeleton. It localises to the microtubule organizing center. It is found in the centrosome. Negative regulator of katanin-mediated microtubule severing and release from the centrosome. Required for central spindle formation and the completion of cytokinesis. May negatively regulate axonal outgrowth by preventing the formation of microtubule bundles that are necessary for transport within the elongating axon. Negative regulator of the Wnt signaling pathway. Represses beta-catenin-mediated transcriptional activation by promoting the nuclear exclusion of beta-catenin. The protein is Leucine zipper putative tumor suppressor 2 (Lzts2) of Rattus norvegicus (Rat).